The primary structure comprises 406 residues: Protein translocase subunit SecD (406 aa).

A run of 6 helical transmembrane segments spans residues 8-28, 240-260, 262-282, 289-309, 334-354, and 361-381; these read IVILILVVVIPAILIFRNPIN, MAAMIALVLVSLFMLAVYRVA, FVADLALCVFGILTAGLMCAI, PGIAGFILSLGMAVDANVIIF, FPAILDGNITTLLITMVLFFF, and GFAVILTIGVLVSMFTAIFIT.

The protein belongs to the SecD/SecF family. SecD subfamily. Forms a complex with SecF. Part of the essential Sec protein translocation apparatus which comprises SecA, SecYEG and auxiliary proteins SecDF. Other proteins may also be involved.

The protein localises to the cell inner membrane. In terms of biological role, part of the Sec protein translocase complex. Interacts with the SecYEG preprotein conducting channel. SecDF uses the proton motive force (PMF) to complete protein translocation after the ATP-dependent function of SecA. This Sebaldella termitidis (strain ATCC 33386 / NCTC 11300) protein is Protein translocase subunit SecD.